Here is a 272-residue protein sequence, read N- to C-terminus: Imidazole glycerol phosphate synthase subunit HisF (272 aa).

Residues D11 and D130 contribute to the active site.

Belongs to the HisA/HisF family. In terms of assembly, heterodimer of HisH and HisF.

It is found in the cytoplasm. The catalysed reaction is 5-[(5-phospho-1-deoxy-D-ribulos-1-ylimino)methylamino]-1-(5-phospho-beta-D-ribosyl)imidazole-4-carboxamide + L-glutamine = D-erythro-1-(imidazol-4-yl)glycerol 3-phosphate + 5-amino-1-(5-phospho-beta-D-ribosyl)imidazole-4-carboxamide + L-glutamate + H(+). It functions in the pathway amino-acid biosynthesis; L-histidine biosynthesis; L-histidine from 5-phospho-alpha-D-ribose 1-diphosphate: step 5/9. IGPS catalyzes the conversion of PRFAR and glutamine to IGP, AICAR and glutamate. The HisF subunit catalyzes the cyclization activity that produces IGP and AICAR from PRFAR using the ammonia provided by the HisH subunit. The polypeptide is Imidazole glycerol phosphate synthase subunit HisF (Methanococcus maripaludis (strain C5 / ATCC BAA-1333)).